Here is a 384-residue protein sequence, read N- to C-terminus: Glucans biosynthesis protein C (384 aa).

Transmembrane regions (helical) follow at residues 17–37, 54–74, 91–111, 140–160, 173–193, 212–232, 240–260, 274–294, 311–331, and 338–358; these read AWLM…THSW, FIHA…SYML, VGIP…ILLQ, LWFL…FTWF, AISL…YAAI, FIVM…LAFI, FTTP…AYLL, TESV…FSLG, ASLF…AYIT, and LIGF…LYEI.

The protein belongs to the acyltransferase 3 family. OpgC subfamily.

The protein resides in the cell membrane. Its pathway is glycan metabolism; osmoregulated periplasmic glucan (OPG) biosynthesis. In terms of biological role, necessary for the succinyl substitution of periplasmic glucans. Could catalyze the transfer of succinyl residues from the cytoplasmic side of the membrane to the nascent glucan backbones on the periplasmic side of the membrane. This chain is Glucans biosynthesis protein C, found in Salmonella choleraesuis (strain SC-B67).